Reading from the N-terminus, the 379-residue chain is Tryptophan 2,3-dioxygenase (379 aa).

Substrate-binding positions include 57–61 (FIITH) and arginine 128. Histidine 312 contacts heme. Residue threonine 327 coordinates substrate.

It belongs to the tryptophan 2,3-dioxygenase family. In terms of assembly, homotetramer. Dimer of dimers. Heme serves as cofactor.

The enzyme catalyses L-tryptophan + O2 = N-formyl-L-kynurenine. It participates in amino-acid degradation; L-tryptophan degradation via kynurenine pathway; L-kynurenine from L-tryptophan: step 1/2. It functions in the pathway pigment biosynthesis; ommochrome biosynthesis. Its function is as follows. Heme-dependent dioxygenase that catalyzes the oxidative cleavage of the L-tryptophan (L-Trp) pyrrole ring and converts L-tryptophan to N-formyl-L-kynurenine. Catalyzes the oxidative cleavage of the indole moiety. Required during larval growth to control the level of potentially harmful free tryptophan in the hemolymph. In the adult the same reaction is the first step in the ommochrome biosynthetic pathway. This is Tryptophan 2,3-dioxygenase from Drosophila melanogaster (Fruit fly).